Reading from the N-terminus, the 874-residue chain is ATP-dependent RNA helicase DDX54 (874 aa).

The segment at 1–76 (MAAGRRVGPG…FPTSECVSDV (76 aa)) is disordered. The span at 20 to 30 (WKKKRLRKRRT) shows a compositional bias: basic residues. At T30 the chain carries Phosphothreonine. 4 positions are modified to phosphoserine: S33, S38, S40, and S74. The segment covering 39-50 (DSDDGEFEIQAE) has biased composition (acidic residues). The Q motif signature appears at 95 to 123 (GGFQSMGLSYPVFKGIMKKGYKVPTPIQR). The 173-residue stretch at 126–298 (IPVILDGKDV…RAGLTEPVLI (173 aa)) folds into the Helicase ATP-binding domain. Position 139–146 (139–146 (ARTGSGKT)) interacts with ATP. The DEAD box motif lies at 246–249 (DEAD). A Helicase C-terminal domain is found at 328-472 (YLLQNVVRPQ…ARPCEEPSVA (145 aa)). Positions 581–590 (ASSKDPSSQM) are enriched in polar residues. The segment at 581-687 (ASSKDPSSQM…PKDFDSERGL (107 aa)) is disordered. Over residues 636 to 645 (TVEGVFTEVV) the composition is skewed to low complexity. The span at 664 to 685 (ETRQRDQEFYVPYRPKDFDSER) shows a compositional bias: basic and acidic residues. A phosphoserine mark is found at S688 and S690. The interval 712-874 (AQNMSRGQQQ…SRKGKMRKRM (163 aa)) is disordered. Positions 713-722 (QNMSRGQQQL) are enriched in polar residues. Composition is skewed to basic and acidic residues over residues 737–747 (QEDKKKIKTES) and 755–771 (YKRD…KIDD). S774 and S780 each carry phosphoserine. Over residues 812–823 (MRSELKTKEQIL) the composition is skewed to basic and acidic residues. Over residues 864 to 874 (PSRKGKMRKRM) the composition is skewed to basic residues.

It belongs to the DEAD box helicase family. DDX54/DBP10 subfamily. As to quaternary structure, interacts in a hormone-dependent manner with nuclear receptors.

The protein localises to the nucleus. It is found in the nucleolus. It catalyses the reaction ATP + H2O = ADP + phosphate + H(+). Its function is as follows. Has RNA-dependent ATPase activity. Represses the transcriptional activity of nuclear receptors. The polypeptide is ATP-dependent RNA helicase DDX54 (Ddx54) (Mus musculus (Mouse)).